The sequence spans 300 residues: 4-hydroxy-tetrahydrodipicolinate synthase (300 aa).

Position 57 (Thr-57) interacts with pyruvate. The Proton donor/acceptor role is filled by Tyr-145. The active-site Schiff-base intermediate with substrate is the Lys-173. Residue Ile-213 coordinates pyruvate.

The protein belongs to the DapA family. In terms of assembly, homotetramer; dimer of dimers.

The protein resides in the cytoplasm. The enzyme catalyses L-aspartate 4-semialdehyde + pyruvate = (2S,4S)-4-hydroxy-2,3,4,5-tetrahydrodipicolinate + H2O + H(+). Its pathway is amino-acid biosynthesis; L-lysine biosynthesis via DAP pathway; (S)-tetrahydrodipicolinate from L-aspartate: step 3/4. Functionally, catalyzes the condensation of (S)-aspartate-beta-semialdehyde [(S)-ASA] and pyruvate to 4-hydroxy-tetrahydrodipicolinate (HTPA). This Corynebacterium jeikeium (strain K411) protein is 4-hydroxy-tetrahydrodipicolinate synthase.